The sequence spans 206 residues: Glycerol-3-phosphate acyltransferase (206 aa).

Transmembrane regions (helical) follow at residues 4–24 (IIGI…LLVG), 55–75 (IIVL…PILL), 78–98 (ELHP…PVFA), 112–132 (MLLV…LTTL), 137–157 (MVSL…ITIG), and 158–178 (IVEQ…FVIF).

Belongs to the PlsY family. As to quaternary structure, probably interacts with PlsX.

It is found in the cell membrane. It carries out the reaction an acyl phosphate + sn-glycerol 3-phosphate = a 1-acyl-sn-glycero-3-phosphate + phosphate. The protein operates within lipid metabolism; phospholipid metabolism. Functionally, catalyzes the transfer of an acyl group from acyl-phosphate (acyl-PO(4)) to glycerol-3-phosphate (G3P) to form lysophosphatidic acid (LPA). This enzyme utilizes acyl-phosphate as fatty acyl donor, but not acyl-CoA or acyl-ACP. The chain is Glycerol-3-phosphate acyltransferase from Exiguobacterium sibiricum (strain DSM 17290 / CCUG 55495 / CIP 109462 / JCM 13490 / 255-15).